A 485-amino-acid polypeptide reads, in one-letter code: Aspartyl/glutamyl-tRNA(Asn/Gln) amidotransferase subunit B (485 aa).

This sequence belongs to the GatB/GatE family. GatB subfamily. As to quaternary structure, heterotrimer of A, B and C subunits.

The enzyme catalyses L-glutamyl-tRNA(Gln) + L-glutamine + ATP + H2O = L-glutaminyl-tRNA(Gln) + L-glutamate + ADP + phosphate + H(+). It catalyses the reaction L-aspartyl-tRNA(Asn) + L-glutamine + ATP + H2O = L-asparaginyl-tRNA(Asn) + L-glutamate + ADP + phosphate + 2 H(+). In terms of biological role, allows the formation of correctly charged Asn-tRNA(Asn) or Gln-tRNA(Gln) through the transamidation of misacylated Asp-tRNA(Asn) or Glu-tRNA(Gln) in organisms which lack either or both of asparaginyl-tRNA or glutaminyl-tRNA synthetases. The reaction takes place in the presence of glutamine and ATP through an activated phospho-Asp-tRNA(Asn) or phospho-Glu-tRNA(Gln). This Borrelia duttonii (strain Ly) protein is Aspartyl/glutamyl-tRNA(Asn/Gln) amidotransferase subunit B.